We begin with the raw amino-acid sequence, 101 residues long: Large ribosomal subunit protein bL28 (101 aa).

This sequence belongs to the bacterial ribosomal protein bL28 family.

This is Large ribosomal subunit protein bL28 from Rhodopseudomonas palustris (strain ATCC BAA-98 / CGA009).